A 143-amino-acid polypeptide reads, in one-letter code: Flagellar assembly factor FliW (143 aa).

This sequence belongs to the FliW family. Interacts with translational regulator CsrA and flagellin(s).

It localises to the cytoplasm. Its function is as follows. Acts as an anti-CsrA protein, binds CsrA and prevents it from repressing translation of its target genes, one of which is flagellin. Binds to flagellin and participates in the assembly of the flagellum. In Clostridium novyi (strain NT), this protein is Flagellar assembly factor FliW.